The sequence spans 542 residues: ATP synthase subunit alpha (542 aa).

Gly173 to Thr180 contributes to the ATP binding site. The disordered stretch occupies residues Pro518–Lys542. A compositionally biased stretch (basic and acidic residues) spans Leu519–Lys542.

The protein belongs to the ATPase alpha/beta chains family. In terms of assembly, F-type ATPases have 2 components, CF(1) - the catalytic core - and CF(0) - the membrane proton channel. CF(1) has five subunits: alpha(3), beta(3), gamma(1), delta(1), epsilon(1). CF(0) has three main subunits: a(1), b(2) and c(9-12). The alpha and beta chains form an alternating ring which encloses part of the gamma chain. CF(1) is attached to CF(0) by a central stalk formed by the gamma and epsilon chains, while a peripheral stalk is formed by the delta and b chains.

The protein resides in the cell membrane. It carries out the reaction ATP + H2O + 4 H(+)(in) = ADP + phosphate + 5 H(+)(out). Its function is as follows. Produces ATP from ADP in the presence of a proton gradient across the membrane. The alpha chain is a regulatory subunit. The sequence is that of ATP synthase subunit alpha from Bifidobacterium adolescentis (strain ATCC 15703 / DSM 20083 / NCTC 11814 / E194a).